A 283-amino-acid chain; its full sequence is E3 ubiquitin-protein ligase SGR9, amyloplastic (283 aa).

The N-terminal 32 residues, 1–32 (MEDENTTIIMASLSALSPSHLTNLTHSILSIS), are a transit peptide targeting the amyloplast. An RING-type; atypical zinc finger spans residues 214-255 (CVICKEEMSEGRDVCEMPCQHFFHWKCILPWLSKKNTCPFCR).

Auto-ubiquitinated as part of the enzymatic reaction. In terms of tissue distribution, expressed in seedlings, hypocotyls, roots and stems. Present especially in hypocotyl and inflorescence endodermis, as well as in root cap columella, tissues that act as statocytes.

Its subcellular location is the plastid. It is found in the amyloplast. It carries out the reaction S-ubiquitinyl-[E2 ubiquitin-conjugating enzyme]-L-cysteine + [acceptor protein]-L-lysine = [E2 ubiquitin-conjugating enzyme]-L-cysteine + N(6)-ubiquitinyl-[acceptor protein]-L-lysine.. The protein operates within protein modification; protein ubiquitination. Functionally, E3 ubiquitin-protein ligase which accepts ubiquitin from an E2 ubiquitin-conjugating enzyme in the form of a thioester and then directly transfers the ubiquitin to targeted substrates. Modulates amyloplast dynamics and sedimentation in statocytes during inflorescence, hypocotyl and root gravitropism, probably by regulating amyloplast interaction with actin filaments (AFs) in endodermal cells. In Arabidopsis thaliana (Mouse-ear cress), this protein is E3 ubiquitin-protein ligase SGR9, amyloplastic (SGR9).